The following is a 342-amino-acid chain: Dihydroorotase (342 aa).

The Zn(2+) site is built by His13 and His15. Residues 15–17 and Asn41 each bind substrate; that span reads HLR. Positions 98, 135, and 173 each coordinate Zn(2+). The residue at position 98 (Lys98) is an N6-carboxylysine. His135 is a substrate binding site. Residue Leu218 participates in substrate binding. Asp246 lines the Zn(2+) pocket. Residue Asp246 is part of the active site. Substrate contacts are provided by His250 and Ala262.

Belongs to the metallo-dependent hydrolases superfamily. DHOase family. Class II DHOase subfamily. Homodimer. The cofactor is Zn(2+).

The catalysed reaction is (S)-dihydroorotate + H2O = N-carbamoyl-L-aspartate + H(+). Its pathway is pyrimidine metabolism; UMP biosynthesis via de novo pathway; (S)-dihydroorotate from bicarbonate: step 3/3. Functionally, catalyzes the reversible cyclization of carbamoyl aspartate to dihydroorotate. This Vibrio parahaemolyticus serotype O3:K6 (strain RIMD 2210633) protein is Dihydroorotase.